Here is a 79-residue protein sequence, read N- to C-terminus: MVDAITVLTAIGITVLMLLMVISGAALIVKELNPNDIFTMQSLKFNRAVTIFKYIGLFIYIPGTIILYATYVKSLLMKS.

At 2 to 8 the chain is on the intravirion side; the sequence is VDAITVL. Residues 9–29 traverse the membrane as a helical segment; sequence TAIGITVLMLLMVISGAALIV. At 30 to 47 the chain is on the virion surface side; sequence KELNPNDIFTMQSLKFNR. Residues 48–68 form a helical membrane-spanning segment; that stretch reads AVTIFKYIGLFIYIPGTIILY. Residues 69–79 are Intravirion-facing; sequence ATYVKSLLMKS.

The protein belongs to the orthopoxvirus OPG081 family.

The protein resides in the virion membrane. Envelope protein. This chain is Protein OPG081 (OPG081), found in Vaccinia virus (strain Western Reserve) (VACV).